The primary structure comprises 549 residues: Neutral amino acid transporter 9 (549 aa).

The disordered stretch occupies residues 1–27; the sequence is MDEDSKPLLGSVPTGDYYTDSLDPKQR. Residues 1–107 lie on the Cytoplasmic side of the membrane; sequence MDEDSKPLLG…GGDSPIKNPS (107 aa). A helical transmembrane segment spans residues 108–128; sequence IVTIFAIWNTMMGTSILSIPW. An important for arginine binding and amino acid transport region spans residues 117–122; it reads TMMGTS. S122 lines the arginine pocket. Topologically, residues 129–134 are lumenal; it reads GIKQAG. The helical transmembrane segment at 135–155 threads the bilayer; the sequence is FTLGIIIIVLMGLLTLYCCYR. Residues 156–186 are Cytoplasmic-facing; it reads VLKSTKSIPYVDTSDWEFPDVCKYYFGGFGK. A helical transmembrane segment spans residues 187 to 213; that stretch reads WSSLVFSLVSLIGAMVVYWVLMSNFLF. The Lumenal portion of the chain corresponds to 214 to 271; that stretch reads NTGKFIFNYVHNVNTSDAFGTNGTERVICPYPDVDPHGNSSTSLYSGSDNSTGLEFDH. 4 N-linked (GlcNAc...) asparagine glycosylation sites follow: N227, N235, N252, and N263. C242 and C412 are disulfide-bonded. Residues 272–288 traverse the membrane as a helical segment; it reads WWSKTNTIPFYLILLLL. At 289 to 297 the chain is on the cytoplasmic side; that stretch reads PLLNFRSAS. Residues 298–322 traverse the membrane as a helical segment; that stretch reads FFARFTFLGTISVIYLIFLVTYKAI. Over 323–344 the chain is Lumenal; sequence QLGFHLEFHWFDSSMFFVPEFR. The chain crosses the membrane as a helical span at residues 345-365; sequence TLFPQLSGVLTLAFFIHNCII. Topologically, residues 366–382 are cytoplasmic; it reads TLMKNNKHQENNVRDLS. The chain crosses the membrane as a helical span at residues 383–403; sequence LAYLLVGLTYLYVGVLIFAAF. Residues 404-425 are Lumenal-facing; it reads PSPPLSKECIEPNFLDNFPSSD. Residues 426–446 form a helical membrane-spanning segment; it reads ILVFVARTFLLFQMTTVYPLL. A CARC motif motif is present at residues 432 to 442; it reads RTFLLFQMTTV. The CRAC motif signature appears at 445-451; that stretch reads LLGYLVR. The Cytoplasmic segment spans residues 447–467; it reads GYLVRVQLMGQIFGNHYPGFL. Residues 468–488 form a helical membrane-spanning segment; the sequence is HVFVLNVFVVGAGVLMARFYP. Residues 489 to 495 lie on the Lumenal side of the membrane; sequence NIGSIIR. Residues 496–516 form a helical membrane-spanning segment; that stretch reads YSGALCGLALVFVLPSLIHMV. The Cytoplasmic portion of the chain corresponds to 517–528; sequence SLKRRGELRWTS. A helical transmembrane segment spans residues 529-549; sequence TLFHGFLILLGVANLLGQFFM.

Belongs to the amino acid/polyamine transporter 2 family. SLC38A9 subfamily. In terms of assembly, associated component of the Ragulator complex. Associated component of the Rag GTPases heterodimers (RRAGA and RRAGC). Glycosylated.

It localises to the lysosome membrane. The protein localises to the late endosome membrane. The enzyme catalyses L-leucine(in) = L-leucine(out). The catalysed reaction is L-tyrosine(in) = L-tyrosine(out). It carries out the reaction L-glutamine(out) = L-glutamine(in). It catalyses the reaction L-asparagine(out) = L-asparagine(in). With respect to regulation, amino acid transport activity is increased by sodium. Transport of L-glutamine, leucine and tyrosine is increased by arginine binding. Lysosomal amino acid transporter involved in the activation of mTORC1 in response to amino acid levels. Probably acts as an amino acid sensor of the Rag GTPases and Ragulator complexes, 2 complexes involved in amino acid sensing and activation of mTORC1, a signaling complex promoting cell growth in response to growth factors, energy levels, and amino acids. Following activation by amino acids, the Ragulator and Rag GTPases function as a scaffold recruiting mTORC1 to lysosomes where it is in turn activated. SLC38A9 mediates transport of amino acids with low capacity and specificity with a slight preference for polar amino acids. Acts as an arginine sensor. Following activation by arginine binding, mediates transport of L-glutamine, leucine and tyrosine with high efficiency, and is required for the efficient utilization of these amino acids after lysosomal protein degradation. However, the transport mechanism is not well defined and the role of sodium is not clear. Guanine exchange factor (GEF) that, upon arginine binding, stimulates GDP release from RRAGA and therefore activates the Rag GTPase heterodimer and the mTORC1 pathway in response to nutrient sufficiency. The polypeptide is Neutral amino acid transporter 9 (Danio rerio (Zebrafish)).